A 283-amino-acid chain; its full sequence is Formamidopyrimidine-DNA glycosylase (283 aa).

Pro2 acts as the Schiff-base intermediate with DNA in catalysis. Glu3 serves as the catalytic Proton donor. Catalysis depends on Lys60, which acts as the Proton donor; for beta-elimination activity. Positions 100, 119, and 164 each coordinate DNA. The segment at 249–283 adopts an FPG-type zinc-finger fold; the sequence is WVYNRAGEPCKVCGDVIQRIKLGGRSSHFCRQCQV. Arg273 (proton donor; for delta-elimination activity) is an active-site residue.

The protein belongs to the FPG family. Monomer. Zn(2+) serves as cofactor.

The enzyme catalyses Hydrolysis of DNA containing ring-opened 7-methylguanine residues, releasing 2,6-diamino-4-hydroxy-5-(N-methyl)formamidopyrimidine.. The catalysed reaction is 2'-deoxyribonucleotide-(2'-deoxyribose 5'-phosphate)-2'-deoxyribonucleotide-DNA = a 3'-end 2'-deoxyribonucleotide-(2,3-dehydro-2,3-deoxyribose 5'-phosphate)-DNA + a 5'-end 5'-phospho-2'-deoxyribonucleoside-DNA + H(+). In terms of biological role, involved in base excision repair of DNA damaged by oxidation or by mutagenic agents. Acts as a DNA glycosylase that recognizes and removes damaged bases. Has a preference for oxidized purines, such as 7,8-dihydro-8-oxoguanine (8-oxoG). Has AP (apurinic/apyrimidinic) lyase activity and introduces nicks in the DNA strand. Cleaves the DNA backbone by beta-delta elimination to generate a single-strand break at the site of the removed base with both 3'- and 5'-phosphates. This is Formamidopyrimidine-DNA glycosylase from Nostoc sp. (strain PCC 7120 / SAG 25.82 / UTEX 2576).